Consider the following 572-residue polypeptide: MSYRIDRQTYAETYGPTVGDRLRLADTDLIIEIEHDYTHYGDEVKFGGGKVIRDGMGQSPIANAEGAVDVVITNAVILDWWGVVKADVGIKDGKIYKIGKAGNPYTQEGVDIIIGPGTEAIAGEGMILTAGGIDAHIHFICPQQIATAIAAGITTMIGGGTGPATGTNATTCTPGPWNIYRMLQAADAFPVNLGFLGKGNSSQPQGLIEQVQAGVVGLKLHEDWGSTPNAIDTCLSVAEDYDIQVAIHTDTLNESGFVEDTIAAFKNRTIHAYHTEGAGGGHAPDIIKLCGQANVLPSSTNPTRPYTVNTLDEHLDMLMVCHHLDPSIPEDVAFAESRIRRETIAAEDILHDLGAFSIISSDSQAMGRVGESIIRTWQTAHKMKVQRGHLRDPQRPGVDHDNFRARRYVAKYTINPAITHGIAEYVGSVEVGKIADLCLWKPAFFGVKPELVIKGGVIAYAQMGDANASIPTPQPVHMQPMFASYGGCRTTTSVTFMSQAGIANNIPEQLGLQKTVLPVGHIRQLRKADLKLNDYLPHIEVDPETYEVRADGELLTCEPATVLPLAQRYFLF.

In terms of domain architecture, Urease spans 131–572; sequence GGIDAHIHFI…LPLAQRYFLF (442 aa). Residues histidine 136, histidine 138, and lysine 219 each contribute to the Ni(2+) site. An N6-carboxylysine modification is found at lysine 219. Position 221 (histidine 221) interacts with substrate. Residues histidine 248 and histidine 274 each contribute to the Ni(2+) site. Residue histidine 322 is the Proton donor of the active site. Aspartate 362 contributes to the Ni(2+) binding site.

The protein belongs to the metallo-dependent hydrolases superfamily. Urease alpha subunit family. In terms of assembly, heterotrimer of UreA (gamma), UreB (beta) and UreC (alpha) subunits. Three heterotrimers associate to form the active enzyme. Ni cation is required as a cofactor. In terms of processing, carboxylation allows a single lysine to coordinate two nickel ions.

The protein localises to the cytoplasm. The catalysed reaction is urea + 2 H2O + H(+) = hydrogencarbonate + 2 NH4(+). Its pathway is nitrogen metabolism; urea degradation; CO(2) and NH(3) from urea (urease route): step 1/1. This chain is Urease subunit alpha, found in Thermosynechococcus vestitus (strain NIES-2133 / IAM M-273 / BP-1).